The primary structure comprises 227 residues: Class I hydrophobin A (227 aa).

A signal peptide spans 1-18; sequence MQFSLSAIVLGLAATVYA. N-linked (GlcNAc...) asparagine glycosylation is present at Asn50. 3 disulfide bridges follow: Cys60/Cys138, Cys68/Cys132, and Cys69/Cys109.

Belongs to the fungal hydrophobin family.

The protein resides in the secreted. Its subcellular location is the cell wall. Functionally, aerial growth, conidiation, and dispersal of filamentous fungi in the environment rely upon a capability of their secreting small amphipathic proteins called hydrophobins (HPBs) with low sequence identity. Class I can self-assemble into an outermost layer of rodlet bundles on aerial cell surfaces, conferring cellular hydrophobicity that supports fungal growth, development and dispersal; whereas Class II form highly ordered films at water-air interfaces through intermolecular interactions but contribute nothing to the rodlet structure. In P.expansum, hydrophobins contribute to germination, tolerance to cold stress and mycotoxins patulin and citrinin production. HfbA and HfbB are essential for fungal surface hydrophobicity and HfbA mediates air and water dispersal. This chain is Class I hydrophobin A, found in Penicillium expansum (Blue mold rot fungus).